A 787-amino-acid chain; its full sequence is Glycine-rich domain-containing protein 2 (787 aa).

As to expression, expressed in leaves, inflorescences, buds, flowers and immature siliques.

Functionally, involved in development and stress responses, probably through an auxin-dependent mechanism. This Arabidopsis thaliana (Mouse-ear cress) protein is Glycine-rich domain-containing protein 2.